We begin with the raw amino-acid sequence, 582 residues long: ATP-dependent lipid A-core flippase (582 aa).

5 consecutive transmembrane segments (helical) span residues 27–47 (LIVAVIALVINAISDTYMISL), 69–89 (LIIFVMMFIRGTSGFVSTYCL), 142–162 (ALVSIVREGASIIGLLVLMFY), 165–185 (WQLSLVLFAVAPVVAWGIGVV), and 249–269 (AAANPIIQMIASFAIVAVLYL). The ABC transmembrane type-1 domain maps to 28 to 310 (IVAVIALVIN…LTNVTSQFQR (283 aa)). Residues 342–578 (VSVKDVSFTY…NGAYAQLHRI (237 aa)) form the ABC transporter domain. 376–383 (GRSGSGKS) is a binding site for ATP.

It belongs to the ABC transporter superfamily. Lipid exporter (TC 3.A.1.106) family. In terms of assembly, homodimer.

The protein localises to the cell inner membrane. The enzyme catalyses ATP + H2O + lipid A-core oligosaccharideSide 1 = ADP + phosphate + lipid A-core oligosaccharideSide 2.. In terms of biological role, involved in lipopolysaccharide (LPS) biosynthesis. Translocates lipid A-core from the inner to the outer leaflet of the inner membrane. Transmembrane domains (TMD) form a pore in the inner membrane and the ATP-binding domain (NBD) is responsible for energy generation. The polypeptide is ATP-dependent lipid A-core flippase (Vibrio parahaemolyticus serotype O3:K6 (strain RIMD 2210633)).